We begin with the raw amino-acid sequence, 360 residues long: MINLFLFCRAGYEKDCAAEIQVRAAELDIGGFVKTNTNDAYVIFQCFQAGDAEVLAKNISLDSLIFARQMFAAKELLKGLPEQDRISPIVEALTQVNKAGELRVETPDTNEAKERSNFCRKFTVPLRQALKKSGALLEKENPKRPIIHVCFVASGQAYVGYSLSNNSSPYFMGIPRLKIAADAPSRSTLKLDEAFIHFIPKEEQETRLSSGMKAVDLGACPGGWTYQLVRRGMFVAAVDNGPMDQGLMDTGQVKHYQADGFRFEPPRKNITWLVCDMIEKPSRVAELIEAWAINGWFKESIFNLKLPMKARYKEVSTILATMEEILKENGVDDFSIAAKHLYHDRDEVTVHLCLRPSQPW.

S-adenosyl-L-methionine-binding positions include S187, 220 to 223 (CPGG), D239, D259, and D276. K305 acts as the Proton acceptor in catalysis.

The protein belongs to the class I-like SAM-binding methyltransferase superfamily. RNA methyltransferase RlmE family. RlmM subfamily. In terms of assembly, monomer.

Its subcellular location is the cytoplasm. It catalyses the reaction cytidine(2498) in 23S rRNA + S-adenosyl-L-methionine = 2'-O-methylcytidine(2498) in 23S rRNA + S-adenosyl-L-homocysteine + H(+). Its function is as follows. Catalyzes the 2'-O-methylation at nucleotide C2498 in 23S rRNA. The polypeptide is Ribosomal RNA large subunit methyltransferase M (Shewanella pealeana (strain ATCC 700345 / ANG-SQ1)).